The primary structure comprises 166 residues: NAD(P)H-quinone oxidoreductase subunit I, chloroplastic (166 aa).

4Fe-4S ferredoxin-type domains lie at 55–84 and 95–124; these read GRIH…VDWK and LNYS…MTEE. C64, C67, C70, C74, C104, C107, C110, and C114 together coordinate [4Fe-4S] cluster.

It belongs to the complex I 23 kDa subunit family. In terms of assembly, NDH is composed of at least 16 different subunits, 5 of which are encoded in the nucleus. [4Fe-4S] cluster serves as cofactor.

Its subcellular location is the plastid. It is found in the chloroplast thylakoid membrane. The enzyme catalyses a plastoquinone + NADH + (n+1) H(+)(in) = a plastoquinol + NAD(+) + n H(+)(out). It carries out the reaction a plastoquinone + NADPH + (n+1) H(+)(in) = a plastoquinol + NADP(+) + n H(+)(out). Functionally, NDH shuttles electrons from NAD(P)H:plastoquinone, via FMN and iron-sulfur (Fe-S) centers, to quinones in the photosynthetic chain and possibly in a chloroplast respiratory chain. The immediate electron acceptor for the enzyme in this species is believed to be plastoquinone. Couples the redox reaction to proton translocation, and thus conserves the redox energy in a proton gradient. This chain is NAD(P)H-quinone oxidoreductase subunit I, chloroplastic, found in Pentanema britannica (British yellowhead).